A 444-amino-acid chain; its full sequence is Vacuolar protein sorting-associated protein 4B (444 aa).

The 79-residue stretch at T4–K82 folds into the MIT domain. A coiled-coil region spans residues A19 to K82. The disordered stretch occupies residues K77 to N118. Residues P86 to D101 show a composition bias toward basic and acidic residues. Phosphoserine occurs at positions 102 and 108. G174–S181 provides a ligand contact to ATP. Position 410 is a phosphoserine (S410).

The protein belongs to the AAA ATPase family. As to quaternary structure, proposed to be monomeric or homodimeric in nucleotide-free form and to oligomerize upon binding to ATP to form two stacked hexameric or heptameric rings with a central pore through which ESCRT-III substrates are translocated in an ATP-dependent manner. In vitro, associates on the inside of a helical tubular structure formed by a CHMP2A-CHMP3 polymer. Interacts with CHMP1A, CHMP1B, CHMP4B and CHMP6. Interacts with CHMP2A. Interacts with VPS4A; the interaction suggests a heteromeric assembly with VPS4A. Interacts with VTA1. In terms of tissue distribution, high level expression seen in the kidney. It is also expressed in the heart, brain, spleen, lung, liver, skeletal muscle, and testis.

The protein resides in the late endosome membrane. It catalyses the reaction ATP + H2O = ADP + phosphate + H(+). In terms of biological role, involved in late steps of the endosomal multivesicular bodies (MVB) pathway. Recognizes membrane-associated ESCRT-III assemblies and catalyzes their disassembly, possibly in combination with membrane fission. Redistributes the ESCRT-III components to the cytoplasm for further rounds of MVB sorting. MVBs contain intraluminal vesicles (ILVs) that are generated by invagination and scission from the limiting membrane of the endosome and mostly are delivered to lysosomes enabling degradation of membrane proteins, such as stimulated growth factor receptors, lysosomal enzymes and lipids. VPS4A/B are required for the exosomal release of SDCBP, CD63 and syndecan. Functionally, (Microbial infection) In conjunction with the ESCRT machinery also appears to function in topologically equivalent membrane fission events, such as the terminal stages of cytokinesis and enveloped virus budding (lentiviruses). This chain is Vacuolar protein sorting-associated protein 4B, found in Mus musculus (Mouse).